The following is a 337-amino-acid chain: Heme A synthase (337 aa).

Transmembrane regions (helical) follow at residues 6-26 (ITKWLFVSCIMVIAMVVIGGI), 87-107 (FIHRLLGRMTVLIYIVPLIYF), 119-139 (LPYIIALLLFCVQGFMGWYMV), 154-174 (LAFHLIIAVIIYHILFYQLIK), and 192-212 (LIFSGIAITVIYVQIFLGALV). Histidine 256 is a binding site for heme. 3 consecutive transmembrane segments (helical) span residues 258–278 (LGSYSVFLVVVVLVICLLTIE), 285–305 (IAYFLMIALLMQISTGIITLL), and 308–328 (VPIIIASIHQLFAIILLSIII). Position 316 (histidine 316) interacts with heme.

The protein belongs to the COX15/CtaA family. Type 2 subfamily. As to quaternary structure, interacts with CtaB. The cofactor is heme b.

The protein resides in the cell membrane. It catalyses the reaction Fe(II)-heme o + 2 A + H2O = Fe(II)-heme a + 2 AH2. It functions in the pathway porphyrin-containing compound metabolism; heme A biosynthesis; heme A from heme O: step 1/1. Functionally, catalyzes the conversion of heme O to heme A by two successive hydroxylations of the methyl group at C8. The first hydroxylation forms heme I, the second hydroxylation results in an unstable dihydroxymethyl group, which spontaneously dehydrates, resulting in the formyl group of heme A. This chain is Heme A synthase, found in Rickettsia akari (strain Hartford).